The primary structure comprises 120 residues: Small ribosomal subunit protein bS16 (120 aa).

Positions 81–120 (GLAKRPTRNNPQKAEPGEKAKERAAKRAEKAAAPAEDAAA) are disordered. Positions 95 to 110 (EPGEKAKERAAKRAEK) are enriched in basic and acidic residues. Low complexity predominate over residues 111–120 (AAAPAEDAAA).

It belongs to the bacterial ribosomal protein bS16 family.

The protein is Small ribosomal subunit protein bS16 of Methylorubrum extorquens (strain CM4 / NCIMB 13688) (Methylobacterium extorquens).